A 310-amino-acid chain; its full sequence is Aspartate carbamoyltransferase catalytic subunit (310 aa).

Carbamoyl phosphate contacts are provided by Arg57 and Thr58. Lys86 contacts L-aspartate. 3 residues coordinate carbamoyl phosphate: Arg107, His135, and Gln138. The L-aspartate site is built by Arg168 and Arg229. The carbamoyl phosphate site is built by Leu268 and Pro269.

It belongs to the aspartate/ornithine carbamoyltransferase superfamily. ATCase family. Heterooligomer of catalytic and regulatory chains.

The catalysed reaction is carbamoyl phosphate + L-aspartate = N-carbamoyl-L-aspartate + phosphate + H(+). It participates in pyrimidine metabolism; UMP biosynthesis via de novo pathway; (S)-dihydroorotate from bicarbonate: step 2/3. Catalyzes the condensation of carbamoyl phosphate and aspartate to form carbamoyl aspartate and inorganic phosphate, the committed step in the de novo pyrimidine nucleotide biosynthesis pathway. The chain is Aspartate carbamoyltransferase catalytic subunit from Thermococcus onnurineus (strain NA1).